We begin with the raw amino-acid sequence, 495 residues long: Calcium-dependent protein kinase 11 (495 aa).

In terms of domain architecture, Protein kinase spans tyrosine 26–isoleucine 284. ATP-binding positions include leucine 32–threonine 40 and lysine 55. The active-site Proton acceptor is aspartate 150. Position 190 is a phosphoserine (serine 190). Residues alanine 290–isoleucine 320 are autoinhibitory domain. EF-hand domains lie at glutamate 327–glutamate 362, leucine 363–methionine 398, glutamate 399–cysteine 434, and leucine 438–valine 468. Ca(2+)-binding residues include aspartate 340, aspartate 342, serine 344, threonine 346, glutamate 351, aspartate 376, aspartate 378, serine 380, threonine 382, glutamate 387, aspartate 412, aspartate 414, serine 416, tyrosine 418, glutamate 423, aspartate 446, aspartate 448, aspartate 450, lysine 452, and glutamate 457.

Belongs to the protein kinase superfamily. Ser/Thr protein kinase family. CDPK subfamily. As to quaternary structure, interacts with Di19.

The protein resides in the cytoplasm. The protein localises to the nucleus. The catalysed reaction is L-seryl-[protein] + ATP = O-phospho-L-seryl-[protein] + ADP + H(+). It carries out the reaction L-threonyl-[protein] + ATP = O-phospho-L-threonyl-[protein] + ADP + H(+). Its activity is regulated as follows. Activated by calcium. Autophosphorylation may play an important role in the regulation of the kinase activity. Its function is as follows. May play a role in signal transduction pathways that involve calcium as a second messenger. Functions as a regulator of the calcium-mediated abscisic acid (ABA) signaling pathway. Phosphorylates ABA-responsive transcription factors ABF1 and ABF4 in vitro. The sequence is that of Calcium-dependent protein kinase 11 (CPK11) from Arabidopsis thaliana (Mouse-ear cress).